Here is a 1233-residue protein sequence, read N- to C-terminus: Reverse gyrase 2 (1233 aa).

The segment at 1 to 41 (MNTIPSSNYLSSCPNCGRVISAERLYKGSVCSECLEEDREF) adopts an RG N-terminal-type zinc-finger fold. Zn(2+)-binding residues include Cys13, Cys16, Cys31, and Cys34. ATP is bound by residues Gln89 and 106–113 (APPGLGKT). The region spanning 93–296 (IIRVLRKESF…ALMGFRPGSS (204 aa)) is the Helicase ATP-binding domain. The short motif at 212–215 (DDVD) is the DEAD box element. The interval 606–1233 (QKVKTVLFIV…DIYYEIKSIR (628 aa)) is topoisomerase I. One can recognise a Toprim domain in the interval 610–774 (TVLFIVESPN…NIKRAEFHEV (165 aa)). Glu616 is a binding site for Mg(2+). An RG C-terminal-type; atypical zinc finger spans residues 691–720 (IKKCINGHQFTDFEQGNQCPKCHTTQIILD). Residues Cys694, His698, Cys709, and Cys712 each contribute to the Zn(2+) site. Asp743 provides a ligand contact to Mg(2+). Positions 790 to 1233 (NVNLVKSQIV…DIYYEIKSIR (444 aa)) constitute a Topo IA-type catalytic domain. Catalysis depends on Tyr947, which acts as the O-(5'-phospho-DNA)-tyrosine intermediate.

It in the N-terminal section; belongs to the DEAD box helicase family. DDVD subfamily. This sequence in the C-terminal section; belongs to the type IA topoisomerase family. In terms of assembly, monomer. Zn(2+) is required as a cofactor. The cofactor is Mg(2+).

Its subcellular location is the cytoplasm. The catalysed reaction is ATP + H2O = ADP + phosphate + H(+). Functionally, modifies the topological state of DNA by introducing positive supercoils in an ATP-dependent process, increasing the linking number in steps of +1. Binds to single-stranded DNA, transiently cleaves and then rejoins the ends, introducing a positive supercoil in the process. The scissile phosphodiester is attacked by the catalytic tyrosine of the enzyme, resulting in the formation of a DNA-(5'-phosphotyrosyl)-enzyme intermediate. Probably involved in rewinding DNA strands in regions of the chromosome that have opened up to allow replication, transcription, DNA repair and/or for DNA protection. This chain is Reverse gyrase 2, found in Sulfurisphaera tokodaii (strain DSM 16993 / JCM 10545 / NBRC 100140 / 7) (Sulfolobus tokodaii).